The following is a 110-amino-acid chain: BolA-like protein 3 (110 aa).

It belongs to the BolA/IbaG family. As to quaternary structure, interacts with NFU1.

It localises to the mitochondrion. Its function is as follows. Acts as a mitochondrial iron-sulfur (Fe-S) cluster assembly factor that facilitates (Fe-S) cluster insertion into a subset of mitochondrial proteins. Probably acts together with NFU1. In Bos taurus (Bovine), this protein is BolA-like protein 3 (BOLA3).